The chain runs to 338 residues: Pyridoxal 5'-phosphate synthase subunit PdxS (338 aa).

Aspartate 66 contributes to the D-ribose 5-phosphate binding site. Lysine 123 acts as the Schiff-base intermediate with D-ribose 5-phosphate in catalysis. Glycine 195 provides a ligand contact to D-ribose 5-phosphate. Residue lysine 207 participates in D-glyceraldehyde 3-phosphate binding. D-ribose 5-phosphate contacts are provided by residues glycine 256 and 277 to 278; that span reads GS.

It belongs to the PdxS/SNZ family. In the presence of PdxT, forms a dodecamer of heterodimers.

It catalyses the reaction aldehydo-D-ribose 5-phosphate + D-glyceraldehyde 3-phosphate + L-glutamine = pyridoxal 5'-phosphate + L-glutamate + phosphate + 3 H2O + H(+). It participates in cofactor biosynthesis; pyridoxal 5'-phosphate biosynthesis. Its function is as follows. Catalyzes the formation of pyridoxal 5'-phosphate from ribose 5-phosphate (RBP), glyceraldehyde 3-phosphate (G3P) and ammonia. The ammonia is provided by the PdxT subunit. Can also use ribulose 5-phosphate and dihydroxyacetone phosphate as substrates, resulting from enzyme-catalyzed isomerization of RBP and G3P, respectively. The chain is Pyridoxal 5'-phosphate synthase subunit PdxS from Saccharolobus islandicus (strain Y.N.15.51 / Yellowstone #2) (Sulfolobus islandicus).